The chain runs to 260 residues: 3'-5' ssDNA/RNA exonuclease TatD (260 aa).

A divalent metal cation contacts are provided by glutamate 91, histidine 127, and histidine 152.

It belongs to the metallo-dependent hydrolases superfamily. TatD-type hydrolase family. TatD subfamily. Monomer. Mg(2+) serves as cofactor.

The protein localises to the cytoplasm. Its function is as follows. 3'-5' exonuclease that prefers single-stranded DNA and RNA. May play a role in the H(2)O(2)-induced DNA damage repair. This chain is 3'-5' ssDNA/RNA exonuclease TatD, found in Shigella flexneri serotype 5b (strain 8401).